Reading from the N-terminus, the 455-residue chain is Bifunctional protein GlmU (455 aa).

A pyrophosphorylase region spans residues 1–232 (MASTTGALIL…DPNLLGVNNP (232 aa)). Residues 10 to 13 (LAAG), Lys24, Gln75, and 80 to 81 (GT) contribute to the UDP-N-acetyl-alpha-D-glucosamine site. Asp106 is a Mg(2+) binding site. UDP-N-acetyl-alpha-D-glucosamine contacts are provided by Gly141, Glu155, Asn172, and Asn230. Asn230 is a Mg(2+) binding site. The linker stretch occupies residues 233-253 (AELIRSEALLRTRLVIGHIEG). The interval 254 to 455 (GVLIHAPETV…QTNLPRKPKA (202 aa)) is N-acetyltransferase. Arg336 and Lys354 together coordinate UDP-N-acetyl-alpha-D-glucosamine. His366 (proton acceptor) is an active-site residue. Tyr369 and Asn380 together coordinate UDP-N-acetyl-alpha-D-glucosamine. Residues Ala383, 389 to 390 (NY), Ser408, Ala426, and Arg443 each bind acetyl-CoA.

In the N-terminal section; belongs to the N-acetylglucosamine-1-phosphate uridyltransferase family. This sequence in the C-terminal section; belongs to the transferase hexapeptide repeat family. As to quaternary structure, homotrimer. Mg(2+) is required as a cofactor.

It localises to the cytoplasm. The enzyme catalyses alpha-D-glucosamine 1-phosphate + acetyl-CoA = N-acetyl-alpha-D-glucosamine 1-phosphate + CoA + H(+). The catalysed reaction is N-acetyl-alpha-D-glucosamine 1-phosphate + UTP + H(+) = UDP-N-acetyl-alpha-D-glucosamine + diphosphate. It functions in the pathway nucleotide-sugar biosynthesis; UDP-N-acetyl-alpha-D-glucosamine biosynthesis; N-acetyl-alpha-D-glucosamine 1-phosphate from alpha-D-glucosamine 6-phosphate (route II): step 2/2. The protein operates within nucleotide-sugar biosynthesis; UDP-N-acetyl-alpha-D-glucosamine biosynthesis; UDP-N-acetyl-alpha-D-glucosamine from N-acetyl-alpha-D-glucosamine 1-phosphate: step 1/1. It participates in bacterial outer membrane biogenesis; LPS lipid A biosynthesis. Functionally, catalyzes the last two sequential reactions in the de novo biosynthetic pathway for UDP-N-acetylglucosamine (UDP-GlcNAc). The C-terminal domain catalyzes the transfer of acetyl group from acetyl coenzyme A to glucosamine-1-phosphate (GlcN-1-P) to produce N-acetylglucosamine-1-phosphate (GlcNAc-1-P), which is converted into UDP-GlcNAc by the transfer of uridine 5-monophosphate (from uridine 5-triphosphate), a reaction catalyzed by the N-terminal domain. The sequence is that of Bifunctional protein GlmU from Nitratidesulfovibrio vulgaris (strain DP4) (Desulfovibrio vulgaris).